Here is a 289-residue protein sequence, read N- to C-terminus: Protease HtpX (289 aa).

2 helical membrane passes run 6–26 and 38–58; these read ILFLLTNLAITFVLGIVLNII and TGILMMSLLFGFTGSLISLFM. H144 provides a ligand contact to Zn(2+). The active site involves E145. Residue H148 coordinates Zn(2+). Transmembrane regions (helical) follow at residues 152–172 and 194–214; these read GDMVTMTLLQGVLNTFVIFLS and LVFWVVDIALQMIFGILATMI. E223 is a Zn(2+) binding site.

Belongs to the peptidase M48B family. The cofactor is Zn(2+).

It is found in the cell inner membrane. This is Protease HtpX from Haemophilus ducreyi (strain 35000HP / ATCC 700724).